The following is a 311-amino-acid chain: Formyltransferase/hydrolase complex subunit D (311 aa).

Belongs to the FTR family. Homotetramer. Octaheteromer. Part of the formyltransferase/hydrolase complex fhc; composed of FhcA, FhcB, FhcC and FhcD.

The protein resides in the cytoplasm. It catalyses the reaction N-formylmethanofuran + 5,6,7,8-tetrahydromethanopterin + H(+) = N(5)-formyl-5,6,7,8-tetrahydromethanopterin + methanofuran. Its pathway is one-carbon metabolism; formaldehyde degradation; formate from formaldehyde (H(4)MPT route): step 4/5. Its function is as follows. Involved in the transformation of 5-formyl tetrahydromethanopterin (5-formyl-H(4)MPT) to methanofuran (MFR) and formate via the intermediate formylmethanofuran (formyl-MFR). Catalyzes the transfer of a formyl group from 5-formyl-H(4)MPT to MFR to produce tetrahydromethanopterin (H(4)MPT) and formyl-MFR, which is then hydrolyzed to formate and MFR. The chain is Formyltransferase/hydrolase complex subunit D from Methylorubrum extorquens (strain ATCC 14718 / DSM 1338 / JCM 2805 / NCIMB 9133 / AM1) (Methylobacterium extorquens).